The following is a 239-amino-acid chain: Tumor protein p53-inducible nuclear protein 1 (239 aa).

Residues 25 to 37 carry the LIR motif; sequence EKEDDEWILVDFI.

As to quaternary structure, interacts with p53/TP53 and HIPK2. Interacts with PRKCG, GABARAP, GABARAPL1, GABARAPL2, MAP1LC3A, MAP1LC3B and MAP1LC3C. Specifically expressed by acinar cells of chronic pancreatitis tissue.

It is found in the cytoplasm. The protein resides in the cytosol. It localises to the nucleus. The protein localises to the PML body. Its subcellular location is the cytoplasmic vesicle. It is found in the autophagosome. Its function is as follows. Antiproliferative and proapoptotic protein involved in cell stress response which acts as a dual regulator of transcription and autophagy. Acts as a positive regulator of autophagy. In response to cellular stress or activation of autophagy, relocates to autophagosomes where it interacts with autophagosome-associated proteins GABARAP, GABARAPL1/L2, MAP1LC3A/B/C and regulates autophagy. Acts as an antioxidant and plays a major role in p53/TP53-driven oxidative stress response. Possesses both a p53/TP53-independent intracellular reactive oxygen species (ROS) regulatory function and a p53/TP53-dependent transcription regulatory function. Positively regulates p53/TP53 and p73/TP73 and stimulates their capacity to induce apoptosis and regulate cell cycle. In response to double-strand DNA breaks, promotes p53/TP53 phosphorylation on 'Ser-46' and subsequent apoptosis. Acts as a tumor suppressor by inducing cell death by an autophagy and caspase-dependent mechanism. Can reduce cell migration by regulating the expression of SPARC. The sequence is that of Tumor protein p53-inducible nuclear protein 1 (Trp53inp1) from Rattus norvegicus (Rat).